A 397-amino-acid polypeptide reads, in one-letter code: Tryptophan synthase beta chain (397 aa).

Residue Lys91 is modified to N6-(pyridoxal phosphate)lysine.

This sequence belongs to the TrpB family. As to quaternary structure, tetramer of two alpha and two beta chains. Pyridoxal 5'-phosphate serves as cofactor.

The catalysed reaction is (1S,2R)-1-C-(indol-3-yl)glycerol 3-phosphate + L-serine = D-glyceraldehyde 3-phosphate + L-tryptophan + H2O. It participates in amino-acid biosynthesis; L-tryptophan biosynthesis; L-tryptophan from chorismate: step 5/5. Functionally, the beta subunit is responsible for the synthesis of L-tryptophan from indole and L-serine. The sequence is that of Tryptophan synthase beta chain from Bacillus cereus (strain AH187).